The primary structure comprises 83 residues: Short neurotoxin OKI-01/OKI-19 (83 aa).

The signal sequence occupies residues 1–21; that stretch reads MKTLLLTLVVVTIVCLDLGYT. 4 cysteine pairs are disulfide-bonded: Cys24–Cys45, Cys38–Cys62, Cys64–Cys75, and Cys76–Cys81.

The protein belongs to the three-finger toxin family. Short-chain subfamily. Type I alpha-neurotoxin sub-subfamily. In terms of tissue distribution, expressed by the venom gland.

It localises to the secreted. Its function is as follows. Binds to muscle nicotinic acetylcholine receptor (nAChR) and inhibit acetylcholine from binding to the receptor, thereby impairing neuromuscular transmission. The protein is Short neurotoxin OKI-01/OKI-19 of Laticauda laticaudata (Blue-ringed sea krait).